The chain runs to 255 residues: tRNA (guanine-N(1)-)-methyltransferase (255 aa).

Residues G113 and 133-138 contribute to the S-adenosyl-L-methionine site; that span reads IGDYVL.

Belongs to the RNA methyltransferase TrmD family. In terms of assembly, homodimer.

It is found in the cytoplasm. It carries out the reaction guanosine(37) in tRNA + S-adenosyl-L-methionine = N(1)-methylguanosine(37) in tRNA + S-adenosyl-L-homocysteine + H(+). Specifically methylates guanosine-37 in various tRNAs. This is tRNA (guanine-N(1)-)-methyltransferase from Escherichia fergusonii (strain ATCC 35469 / DSM 13698 / CCUG 18766 / IAM 14443 / JCM 21226 / LMG 7866 / NBRC 102419 / NCTC 12128 / CDC 0568-73).